Here is a 504-residue protein sequence, read N- to C-terminus: L-amino-acid oxidase (504 aa).

The signal sequence occupies residues 1 to 18 (MNIFFMFSLLFLATLGSC). C28 and C191 form a disulfide bridge. Residues 61–62 (MS), 81–82 (EA), R89, and 105–108 (GPMR) contribute to the FAD site. Residue R108 participates in substrate binding. An N-linked (GlcNAc...) asparagine glycan is attached at N190. Position 241 (H241) interacts with substrate. Residue V279 coordinates FAD. Residues C349 and C430 are joined by a disulfide bond. A glycan (N-linked (GlcNAc...) asparagine) is linked at N379. Position 390 (Y390) interacts with substrate. FAD contacts are provided by residues E475 and 482–487 (GWIDST). 482–483 (GW) serves as a coordination point for substrate.

It belongs to the flavin monoamine oxidase family. FIG1 subfamily. Homodimer; non-covalently linked. The cofactor is FAD. As to expression, expressed by the venom gland.

It is found in the secreted. It carries out the reaction an L-alpha-amino acid + O2 + H2O = a 2-oxocarboxylate + H2O2 + NH4(+). Functionally, catalyzes an oxidative deamination of predominantly hydrophobic and aromatic L-amino acids, thus producing hydrogen peroxide that may contribute to the diverse toxic effects of this enzyme. Exhibits diverse biological activities, such as hemorrhage, hemolysis, edema, apoptosis of vascular endothelial cells or tumor cell lines, antibacterial and antiparasitic activities, as well as regulation of platelet aggregation. Its effect on platelets is controversial, since it either induces aggregation or inhibits agonist-induced aggregation. These different effects are probably due to different experimental conditions. The protein is L-amino-acid oxidase of Echis ocellatus (Ocellated saw-scaled viper).